The chain runs to 218 residues: ADP-sugar pyrophosphatase (218 aa).

Met1 is subject to N-acetylmethionine. Ser10 carries the phosphoserine modification. A substrate-binding site is contributed by Trp27. Lys41 participates in a covalent cross-link: Glycyl lysine isopeptide (Lys-Gly) (interchain with G-Cter in SUMO2). Phosphothreonine is present on Thr44. Substrate is bound by residues 45–46 (WE) and Arg83. Positions 56–196 (KSADAVSVIP…EQHLTVDAKV (141 aa)) constitute a Nudix hydrolase domain. Residue Ala95 coordinates Mg(2+). The Nudix box motif lies at 96–117 (GFIEDGESPEAAALRELEEETG). Phe97 contributes to the substrate binding site. Glu111 and Glu115 together coordinate Mg(2+). Asp132 contacts substrate. Glu165 contacts Mg(2+). Residues Lys209 and Lys217 each carry the N6-acetyllysine modification.

This sequence belongs to the Nudix hydrolase family. Homodimer. Interacts with PARG. The cofactor is Mg(2+). Post-translationally, phosphorylation at Thr-44 is required for homodimer stability; dephosphorylation results in destabilization of the homodimer. Dephosphorylation at Thr-44 promotes the ATP-synthesis activity. As to expression, widely expressed. Most abundant in liver.

It is found in the nucleus. It catalyses the reaction D-ribose 5-phosphate + ATP + H(+) = ADP-D-ribose + diphosphate. The catalysed reaction is ADP-D-ribose + H2O = D-ribose 5-phosphate + AMP + 2 H(+). It carries out the reaction 8-oxo-dGDP + H2O = 8-oxo-dGMP + phosphate + H(+). In terms of biological role, enzyme that can either act as an ADP-sugar pyrophosphatase in absence of diphosphate or catalyze the synthesis of ATP in presence of diphosphate. In absence of diphosphate, hydrolyzes with similar activities various modified nucleoside diphosphates such as ADP-ribose, ADP-mannose, ADP-glucose, 8-oxo-GDP and 8-oxo-dGDP. Can also hydrolyze other nucleotide sugars with low activity. In presence of diphosphate, mediates the synthesis of ATP in the nucleus by catalyzing the conversion of ADP-ribose to ATP and ribose 5-phosphate. Nuclear ATP synthesis takes place when dephosphorylated at Thr-44. Nuclear ATP generation is required for extensive chromatin remodeling events that are energy-consuming. Does not play a role in U8 snoRNA decapping activity. Binds U8 snoRNA. The sequence is that of ADP-sugar pyrophosphatase from Mus musculus (Mouse).